Reading from the N-terminus, the 122-residue chain is Large ribosomal subunit protein uL14 (122 aa).

This sequence belongs to the universal ribosomal protein uL14 family. In terms of assembly, part of the 50S ribosomal subunit. Forms a cluster with proteins L3 and L19. In the 70S ribosome, L14 and L19 interact and together make contacts with the 16S rRNA in bridges B5 and B8.

Functionally, binds to 23S rRNA. Forms part of two intersubunit bridges in the 70S ribosome. The sequence is that of Large ribosomal subunit protein uL14 from Afipia carboxidovorans (strain ATCC 49405 / DSM 1227 / KCTC 32145 / OM5) (Oligotropha carboxidovorans).